Here is a 356-residue protein sequence, read N- to C-terminus: Nicotinate-nucleotide--dimethylbenzimidazole phosphoribosyltransferase (356 aa).

E317 serves as the catalytic Proton acceptor.

The protein belongs to the CobT family. As to quaternary structure, homodimer.

The catalysed reaction is 5,6-dimethylbenzimidazole + nicotinate beta-D-ribonucleotide = alpha-ribazole 5'-phosphate + nicotinate + H(+). It participates in nucleoside biosynthesis; alpha-ribazole biosynthesis; alpha-ribazole from 5,6-dimethylbenzimidazole: step 1/2. Catalyzes the synthesis of alpha-ribazole-5'-phosphate from nicotinate mononucleotide (NAMN) and 5,6-dimethylbenzimidazole (DMB). In Salmonella gallinarum (strain 287/91 / NCTC 13346), this protein is Nicotinate-nucleotide--dimethylbenzimidazole phosphoribosyltransferase.